The primary structure comprises 657 residues: N-acetylgalactosaminyltransferase 7 (657 aa).

The Cytoplasmic portion of the chain corresponds to 1–6 (MRLKIG). The helical; Signal-anchor for type II membrane protein transmembrane segment at 7 to 29 (FILRSLLVVGSFLGLVVLWSSLT) threads the bilayer. The Lumenal segment spans residues 30–657 (PRPDDPSPLS…KWEMNNIHSV (628 aa)). The tract at residues 31 to 65 (RPDDPSPLSRMREDRDVNDPMPNRGGNGLAPGEDR) is disordered. 5 cysteine pairs are disulfide-bonded: cysteine 197-cysteine 435, cysteine 426-cysteine 507, cysteine 545-cysteine 562, cysteine 585-cysteine 600, and cysteine 625-cysteine 640. The catalytic subdomain A stretch occupies residues 206–317 (LLTSSVVIVF…VNWYAPLVAP (112 aa)). Substrate is bound by residues aspartate 247 and arginine 277. Positions 301 and 303 each coordinate Mn(2+). Positions 381-443 (PYRSPAMAGG…PCSRVGHIYR (63 aa)) are catalytic subdomain B. Position 412 (tryptophan 412) interacts with substrate. Histidine 440 is a Mn(2+) binding site. Residue arginine 443 coordinates substrate. A Ricin B-type lectin domain is found at 532–652 (VDWGEIRGFE…SKTTQKWEMN (121 aa)).

This sequence belongs to the glycosyltransferase 2 family. GalNAc-T subfamily. It depends on Mn(2+) as a cofactor. In terms of tissue distribution, widely expressed. Expressed in uterus, retina, kidney, small intestine, omentum, stomach and CNS.

It is found in the golgi apparatus membrane. The catalysed reaction is L-seryl-[protein] + UDP-N-acetyl-alpha-D-galactosamine = a 3-O-[N-acetyl-alpha-D-galactosaminyl]-L-seryl-[protein] + UDP + H(+). It catalyses the reaction L-threonyl-[protein] + UDP-N-acetyl-alpha-D-galactosamine = a 3-O-[N-acetyl-alpha-D-galactosaminyl]-L-threonyl-[protein] + UDP + H(+). It functions in the pathway protein modification; protein glycosylation. Glycopeptide transferase involved in O-linked oligosaccharide biosynthesis, which catalyzes the transfer of an N-acetyl-D-galactosamine residue to an already glycosylated peptide. In contrast to other proteins of the family, it does not act as a peptide transferase that transfers GalNAc onto serine or threonine residue on the protein receptor, but instead requires the prior addition of a GalNAc on a peptide before adding additional GalNAc moieties. Some peptide transferase activity is however not excluded, considering that its appropriate peptide substrate may remain unidentified. This is N-acetylgalactosaminyltransferase 7 (GALNT7) from Homo sapiens (Human).